Consider the following 449-residue polypeptide: Glucose-6-phosphate isomerase (449 aa).

Residue Glu291 is the Proton donor of the active site. Catalysis depends on residues His312 and Lys426.

The protein belongs to the GPI family.

The protein localises to the cytoplasm. It carries out the reaction alpha-D-glucose 6-phosphate = beta-D-fructose 6-phosphate. The protein operates within carbohydrate biosynthesis; gluconeogenesis. It functions in the pathway carbohydrate degradation; glycolysis; D-glyceraldehyde 3-phosphate and glycerone phosphate from D-glucose: step 2/4. Its function is as follows. Catalyzes the reversible isomerization of glucose-6-phosphate to fructose-6-phosphate. This is Glucose-6-phosphate isomerase from Pediococcus pentosaceus (strain ATCC 25745 / CCUG 21536 / LMG 10740 / 183-1w).